Here is an 885-residue protein sequence, read N- to C-terminus: Translation initiation factor IF-2 (885 aa).

2 disordered regions span residues 55-150 and 269-300; these read IPDK…ADVT and NTIN…EAVT. The span at 65 to 146 shows a compositional bias: basic and acidic residues; sequence EPKAKKEPKK…AEAPKPKESL (82 aa). Positions 281-290 are enriched in basic residues; sequence RRARKKHKKP. The tr-type G domain occupies 384-553; that stretch reads PRAPVITIMG…LLQADLLELK (170 aa). Residues 393–400 form a G1 region; that stretch reads GHVDHGKT. Residue 393–400 participates in GTP binding; that stretch reads GHVDHGKT. Positions 418 to 422 are G2; sequence GITQH. Positions 439–442 are G3; that stretch reads DTPG. Residues 439-443 and 493-496 each bind GTP; these read DTPGH and NKMD. A G4 region spans residues 493-496; the sequence is NKMD. The interval 529 to 531 is G5; sequence SAK.

This sequence belongs to the TRAFAC class translation factor GTPase superfamily. Classic translation factor GTPase family. IF-2 subfamily.

Its subcellular location is the cytoplasm. Its function is as follows. One of the essential components for the initiation of protein synthesis. Protects formylmethionyl-tRNA from spontaneous hydrolysis and promotes its binding to the 30S ribosomal subunits. Also involved in the hydrolysis of GTP during the formation of the 70S ribosomal complex. The polypeptide is Translation initiation factor IF-2 (Campylobacter concisus (strain 13826)).